Here is a 753-residue protein sequence, read N- to C-terminus: Probable tubulin--tyrosine ligase PBY1 (753 aa).

The region spanning 343–734 (MEYIYKPLTH…PIFNENRNKT (392 aa)) is the TTL domain.

This sequence belongs to the tubulin--tyrosine ligase family. Requires Mg(2+) as cofactor. K(+) serves as cofactor.

It localises to the cytoplasm. The protein localises to the P-body. The enzyme catalyses C-terminal L-alpha-aminoacyl-L-glutamyl-L-glutamyl-[tubulin] + L-tyrosine + ATP = C-terminal L-alpha-aminoacyl-L-glutamyl-L-glutamyl-L-tyrosyl-[tubulin] + ADP + phosphate + H(+). Probable P-body-associated tubulin--tyrosine ligase. This Saccharomyces cerevisiae (strain ATCC 204508 / S288c) (Baker's yeast) protein is Probable tubulin--tyrosine ligase PBY1 (PBY1).